We begin with the raw amino-acid sequence, 51 residues long: Large ribosomal subunit protein bL33 (51 aa).

The interval 1-23 (MRDKIKLESSAGTGHFYTTTKNK) is disordered. Polar residues predominate over residues 10-20 (SAGTGHFYTTT).

Belongs to the bacterial ribosomal protein bL33 family.

This chain is Large ribosomal subunit protein bL33, found in Chromobacterium violaceum (strain ATCC 12472 / DSM 30191 / JCM 1249 / CCUG 213 / NBRC 12614 / NCIMB 9131 / NCTC 9757 / MK).